A 476-amino-acid polypeptide reads, in one-letter code: UDP-N-acetylmuramate--L-alanine ligase (476 aa).

ATP is bound at residue Gly-107–Thr-113.

It belongs to the MurCDEF family.

The protein localises to the cytoplasm. It carries out the reaction UDP-N-acetyl-alpha-D-muramate + L-alanine + ATP = UDP-N-acetyl-alpha-D-muramoyl-L-alanine + ADP + phosphate + H(+). The protein operates within cell wall biogenesis; peptidoglycan biosynthesis. Its function is as follows. Cell wall formation. In Roseiflexus castenholzii (strain DSM 13941 / HLO8), this protein is UDP-N-acetylmuramate--L-alanine ligase.